The following is a 379-amino-acid chain: Tubulin--tyrosine ligase (379 aa).

Residues 3 to 370 enclose the TTL domain; the sequence is TFVVRDENSS…PPDAEQQQQQ (368 aa).

This sequence belongs to the tubulin--tyrosine ligase family. In terms of assembly, monomer. Mg(2+) serves as cofactor. K(+) is required as a cofactor.

It catalyses the reaction C-terminal L-alpha-aminoacyl-L-glutamyl-L-glutamyl-[tubulin] + L-tyrosine + ATP = C-terminal L-alpha-aminoacyl-L-glutamyl-L-glutamyl-L-tyrosyl-[tubulin] + ADP + phosphate + H(+). In terms of biological role, catalyzes the post-translational addition of a tyrosine to the C-terminal end of detyrosinated alpha-tubulin. The polypeptide is Tubulin--tyrosine ligase (TTL) (Sus scrofa (Pig)).